A 235-amino-acid chain; its full sequence is NADH-quinone oxidoreductase subunit C (235 aa).

The protein belongs to the complex I 30 kDa subunit family. In terms of assembly, NDH-1 is composed of 14 different subunits. Subunits NuoB, C, D, E, F, and G constitute the peripheral sector of the complex.

Its subcellular location is the cell membrane. It catalyses the reaction a quinone + NADH + 5 H(+)(in) = a quinol + NAD(+) + 4 H(+)(out). Functionally, NDH-1 shuttles electrons from NADH, via FMN and iron-sulfur (Fe-S) centers, to quinones in the respiratory chain. The immediate electron acceptor for the enzyme in this species is believed to be a menaquinone. Couples the redox reaction to proton translocation (for every two electrons transferred, four hydrogen ions are translocated across the cytoplasmic membrane), and thus conserves the redox energy in a proton gradient. In Mycolicibacterium paratuberculosis (strain ATCC BAA-968 / K-10) (Mycobacterium paratuberculosis), this protein is NADH-quinone oxidoreductase subunit C.